We begin with the raw amino-acid sequence, 478 residues long: PRAME family member 27 (478 aa).

The stretch at 17 to 40 is one LRR 1 repeat; the sequence is RSLLRDQALAMSTLEELPTELFPP. The stretch at 99–126 is one LRR 1; degenerate repeat; that stretch reads RWKLQVLDLQDVCENFWMVWSEAMARGS. The LRR 2; degenerate repeat unit spans residues 181 to 205; the sequence is HLCCKKLKILGMPFRNIRSILKMVN. Residues 206–232 form an LRR 3; degenerate repeat; sequence LDCIQEVEVNCKWVLPILTQFTPYLGH. One copy of the LRR 4; degenerate repeat lies at 233–268; it reads MRNLQKLVLSHMDVSRYVSPEQKKEIVTQFTTQFLK. 5 LRR repeats span residues 269–294, 295–326, 327–348, 351–378, and 379–403; these read LHCLQKLYMNSVSFLEGHLDQLLSCL, KTSLKVLTITNCVLLESDLKHLSQCPSISQLK, TLDLSGIRLTNYSLVPLQILLE, AATLEYLDLDDCGIIDSQVNAILPALSR, and CFELNAFSFCGNPISMATLENLLSH.

Belongs to the PRAME family.

This Homo sapiens (Human) protein is PRAME family member 27.